A 282-amino-acid polypeptide reads, in one-letter code: Protein-export membrane protein SecF (282 aa).

Helical transmembrane passes span 9–29 (IAIPIALLILSILLIGFKGIP), 120–140 (EGFKAVGFAFMFMAIVVYLYF), 149–169 (IILSALSDIIMALGAMSLLGI), 174–194 (ATIAALLMVIGYSVDSDILLT), 214–234 (KTGLTMTLTTITAMLILLIVV), and 236–256 (LFIPVADILANIATVLILALI).

It belongs to the SecD/SecF family. SecF subfamily. As to quaternary structure, part of the protein translocation apparatus. Forms a complex with SecD.

It localises to the cell membrane. Functionally, involved in protein export. In Methanocaldococcus jannaschii (strain ATCC 43067 / DSM 2661 / JAL-1 / JCM 10045 / NBRC 100440) (Methanococcus jannaschii), this protein is Protein-export membrane protein SecF.